A 69-amino-acid polypeptide reads, in one-letter code: Disintegrin EC6 subunit beta (69 aa).

The 65-residue stretch at 1-65 (NSVHPCCDPV…DCPPNPWNGK (65 aa)) folds into the Disintegrin domain. Intrachain disulfides connect C6/C29, C20/C26, C25/C50, and C38/C57. The short motif at 42–44 (RGD) is the Cell attachment site element.

The protein belongs to the venom metalloproteinase (M12B) family. P-II subfamily. P-IIe sub-subfamily. Heterodimer with subunit alpha; disulfide-linked. In terms of tissue distribution, expressed by the venom gland.

The protein resides in the secreted. Its function is as follows. Potently inhibits adhesion of alpha-4/beta-1 (ITGA4/ITGB1) and alpha-9/beta-1 (ITGA9/ITGB1) integrins to VCAM1, and adhesion of alpha-5/beta-1 (ITGA5/ITGB1) integrin to fibronectin. Has a much less effect on alpha-IIb/beta-3 (ITGA2B/ITGB3) integrin. Also potently inhibits neutrophil migration across TNF-alpha-activated human umbilical endothelial cells. The sequence is that of Disintegrin EC6 subunit beta from Echis carinatus sochureki (Saw-scaled viper).